The primary structure comprises 1377 residues: DNA-directed RNA polymerase subunit beta' (1377 aa).

Positions 70, 72, 85, and 88 each coordinate Zn(2+). Mg(2+) contacts are provided by Asp-460, Asp-462, and Asp-464. Positions 808, 882, 889, and 892 each coordinate Zn(2+).

This sequence belongs to the RNA polymerase beta' chain family. In terms of assembly, the RNAP catalytic core consists of 2 alpha, 1 beta, 1 beta' and 1 omega subunit. When a sigma factor is associated with the core the holoenzyme is formed, which can initiate transcription. The cofactor is Mg(2+). Zn(2+) serves as cofactor.

The enzyme catalyses RNA(n) + a ribonucleoside 5'-triphosphate = RNA(n+1) + diphosphate. DNA-dependent RNA polymerase catalyzes the transcription of DNA into RNA using the four ribonucleoside triphosphates as substrates. The chain is DNA-directed RNA polymerase subunit beta' from Geotalea uraniireducens (strain Rf4) (Geobacter uraniireducens).